Here is a 293-residue protein sequence, read N- to C-terminus: RNA pseudouridylate synthase domain-containing protein 1 (293 aa).

Residue aspartate 67 is part of the active site.

It belongs to the pseudouridine synthase RluA family.

The sequence is that of RNA pseudouridylate synthase domain-containing protein 1 (rpusd1) from Danio rerio (Zebrafish).